The primary structure comprises 742 residues: Synaptic vesicle glycoprotein 2A (742 aa).

The segment at 1–57 (MEEGFRDRAAFIRGAKDIAKEVKKHAAKKVVKGLDRVQDEYSRRSYSRFEEEDDDDD) is interaction with SYT1. At 1–169 (MEEGFRDRAA…GHGRFQWTLY (169 aa)) the chain is on the cytoplasmic side. Residues 40–49 (EYSRRSYSRF) are compositionally biased toward basic and acidic residues. Residues 40-145 (EYSRRSYSRF…RGEAQRRKDR (106 aa)) form a disordered region. A phosphoserine mark is found at Ser-80 and Ser-81. Thr-84 carries the post-translational modification Phosphothreonine. Residues 122 to 137 (VRGGLSDGEGPPGGRG) are compositionally biased toward gly residues. Ser-127 bears the Phosphoserine mark. The helical transmembrane segment at 170-190 (FVLGLALMADGVEVFVVGFVL) threads the bilayer. Over 191–205 (PSAEKDMCLSDSNKG) the chain is Extracellular. Residues 206–226 (MLGLIVYLGMMVGAFLWGGLA) traverse the membrane as a helical segment. Over 227-233 (DRLGRRQ) the chain is Cytoplasmic. The chain crosses the membrane as a helical span at residues 234–254 (CLLISLSVNSVFAFFSSFVQG). The Extracellular segment spans residues 255–262 (YGTFLFCR). The helical transmembrane segment at 263–283 (LLSGVGIGGSIPIVFSYFSEF) threads the bilayer. At 284–294 (LAQEKRGEHLS) the chain is on the cytoplasmic side. The chain crosses the membrane as a helical span at residues 295-315 (WLCMFWMIGGVYAAAMAWAII). Residues 316–334 (PHYGWSFQMGSAYQFHSWR) are Extracellular-facing. Residues 335–355 (VFVLVCAFPSVFAIGALTTQP) form a helical membrane-spanning segment. At 356–447 (ESPRFFLENG…CFSPEYRRIT (92 aa)) the chain is on the cytoplasmic side. The residue at position 393 (Ser-393) is a Phosphoserine. A helical membrane pass occupies residues 448–468 (LMMMGVWFTMSFSYYGLTVWF). Residues 469-598 (PDMIRHLQAV…GTGEGAYMVY (130 aa)) are Extracellular-facing. Tyr-480 is subject to Phosphotyrosine. N-linked (GlcNAc...) asparagine glycosylation is found at Asn-498, Asn-548, and Asn-573. A helical transmembrane segment spans residues 599-619 (FVSFLGTLAVLPGNIVSALLM). At 620–626 (DKIGRLR) the chain is on the cytoplasmic side. The chain crosses the membrane as a helical span at residues 627–647 (MLAGSSVLSCVSCFFLSFGNS). Residues 648–651 (ESAM) are Extracellular-facing. A helical transmembrane segment spans residues 652–672 (IALLCLFGGVSIASWNALDVL). Residues 673 to 685 (TVELYPSDKRTTA) lie on the Cytoplasmic side of the membrane. The chain crosses the membrane as a helical span at residues 686-708 (FGFLNALCKLAAVLGISIFTSFV). The Extracellular segment spans residues 709-712 (GITK). A helical transmembrane segment spans residues 713-731 (AAPILFASAALALGSSLAL). Topologically, residues 732–742 (KLPETRGQVLQ) are cytoplasmic.

It belongs to the major facilitator superfamily. As to quaternary structure, interacts with SYT1/synaptotagmin-1 in a calcium-dependent manner. Binds the adapter protein complex AP-2. (Microbial infection) Interacts with C.botulinum neurotoxin type A (BoNT/A, botA). Phosphorylation by CK1 of the N-terminal cytoplasmic domain regulates interaction with SYT1. Post-translationally, N-glycosylated. In terms of tissue distribution, expressed in conventional synapses and cone ribbon synapses in the retina (at protein level). Expressed in diaphragm motor nerve terminals (at protein level). Expressed in hippocampus neurons (at protein level).

The protein localises to the presynapse. It is found in the cytoplasmic vesicle. Its subcellular location is the secretory vesicle. The protein resides in the synaptic vesicle membrane. Functionally, plays a role in the control of regulated secretion in neural and endocrine cells, enhancing selectively low-frequency neurotransmission. Positively regulates vesicle fusion by maintaining the readily releasable pool of secretory vesicles. Its function is as follows. (Microbial infection) Receptor for C.botulinum neurotoxin type A (BoNT/A, botA); the toxin probably binds via extracellular loop 4. In terms of biological role, (Microbial infection) Possible receptor for C.botulinum neurotoxin type D (BoNT/D, botD); BoNT/D does not bind to extracellular loop 4 as do BoNT/A and BoNT/E. (Microbial infection) Receptor for C.botulinum neurotoxin type E (BoNT/E); the toxin probably binds via extracellular loop 4. It probably requires glycosylation of Asn-573. This is Synaptic vesicle glycoprotein 2A (Sv2a) from Mus musculus (Mouse).